Reading from the N-terminus, the 533-residue chain is Calcium-dependent protein kinase 19 (533 aa).

Polar residues-rich tracts occupy residues 1 to 12 and 24 to 38; these read MGSCCSRATSPD and SHQT…SYNH. Residues 1–53 are disordered; that stretch reads MGSCCSRATSPDSGRGGANGYGYSHQTKPAQTTPSYNHPQPPPPAEVRYTPSA. Glycine 2 carries N-myristoyl glycine lipidation. The Protein kinase domain maps to 85–343; that stretch reads YSLGKELGRG…SAQVLQHPWL (259 aa). ATP-binding positions include 91 to 99 and lysine 114; that span reads LGRGQFGVT. The Proton acceptor role is filled by aspartate 209. Positions 348–378 are autoinhibitory domain; it reads ASDKPIDSAVLSRMKQFRAMNKLKKMALKVI. 4 EF-hand domains span residues 385–420, 421–456, 457–492, and 497–527; these read EEIK…LGSK, LSEA…RHKL, ERDE…HEMG, and IKDI…GGMQ. 19 residues coordinate Ca(2+): aspartate 398, aspartate 400, serine 402, threonine 404, glutamate 409, aspartate 434, aspartate 436, asparagine 438, serine 440, glutamate 445, aspartate 470, aspartate 472, serine 474, glutamate 481, aspartate 505, aspartate 507, aspartate 509, arginine 511, and glutamate 516.

It belongs to the protein kinase superfamily. Ser/Thr protein kinase family. CDPK subfamily. As to expression, expressed in root tips, leaf veins, mesophyll cells, flower reproductive organs and mature pollen grains.

The protein localises to the membrane. It catalyses the reaction L-seryl-[protein] + ATP = O-phospho-L-seryl-[protein] + ADP + H(+). It carries out the reaction L-threonyl-[protein] + ATP = O-phospho-L-threonyl-[protein] + ADP + H(+). Activated by calcium. Autophosphorylation may play an important role in the regulation of the kinase activity. Its function is as follows. May play a role in signal transduction pathways that involve calcium as a second messenger. The protein is Calcium-dependent protein kinase 19 of Oryza sativa subsp. japonica (Rice).